Here is a 235-residue protein sequence, read N- to C-terminus: Purine nucleoside phosphorylase DeoD-type (235 aa).

An a purine D-ribonucleoside-binding site is contributed by His-4. Phosphate-binding positions include Gly-20, Arg-24, Arg-43, and 87 to 90 (RVGT). A purine D-ribonucleoside-binding positions include 179-181 (EME) and 203-204 (SD). Asp-204 functions as the Proton donor in the catalytic mechanism.

Belongs to the PNP/UDP phosphorylase family. In terms of assembly, homohexamer; trimer of homodimers.

The enzyme catalyses a purine D-ribonucleoside + phosphate = a purine nucleobase + alpha-D-ribose 1-phosphate. The catalysed reaction is a purine 2'-deoxy-D-ribonucleoside + phosphate = a purine nucleobase + 2-deoxy-alpha-D-ribose 1-phosphate. Its function is as follows. Catalyzes the reversible phosphorolytic breakdown of the N-glycosidic bond in the beta-(deoxy)ribonucleoside molecules, with the formation of the corresponding free purine bases and pentose-1-phosphate. In Brevibacillus brevis (strain 47 / JCM 6285 / NBRC 100599), this protein is Purine nucleoside phosphorylase DeoD-type.